The chain runs to 579 residues: Folliculin (579 aa).

The tract at residues 32–82 is disordered; it reads GAGSGDSPGQVEQAEEEEGGIQMSSRVRAHSPAEGASTDSSSPGPKKSDMC. Phosphoserine occurs at positions 62 and 73. The region spanning 86–242 is the uDENN FLCN/SMCR8-type domain; that stretch reads RSLAVGHPGY…RNGNAARSLT (157 aa). Positions 287–310 form a coiled coil; the sequence is EKLADLEEESESWDNSEAEEEEKA. A compositionally biased stretch (acidic residues) spans 294-308; it reads EESESWDNSEAEEEE. Residues 294 to 320 are disordered; sequence EESESWDNSEAEEEEKAPATAEGAEGR. 5 positions are modified to phosphoserine: Ser302, Ser406, Ser537, Ser542, and Ser571. The 153-residue stretch at 339-491 folds into the cDENN FLCN/SMCR8-type domain; it reads QPPKLSVFKS…ILNKMEAALT (153 aa). The dDENN FLCN/SMCR8-type domain maps to 493-558; sequence QNLSVDVVDQ…LLKFWMTGLS (66 aa).

The protein belongs to the folliculin family. Interacts (via C-terminus) with FNIP1 or FNIP2 (via C-terminus). Component of the lysosomal folliculin complex (LFC), composed of FLCN, FNIP1 (or FNIP2), RagA/RRAGA or RagB/RRAGB GDP-bound, RagC/RRAGC or RagD/RRAGD GTP-bound, and Ragulator. Interaction with FNIP1 or FNIP2 mediates indirect interaction with the PRKAA1, PRKAB1 and PRKAG1 subunits of 5'-AMP-activated protein kinase (AMPK). Interacts with HSP90AA1 in the presence of FNIP1. Interacts with HSP70, STUB1, CDC37, AHSA1, CCT2, STIP1, PTGES3 and PPP5C. Interacts with GABARAP; interaction takes place in the presence of FNIP1 and/or FNIP2. Interacts with RILP; the interaction is direct and promotes association between RILP and RAB34. Interacts with KIF3A and KIF3B. Interacts with lactate dehydrogenase LDHA, but not LDHB; the interaction is direct, may preferentially bind LDHA dimers rather than tetramers, and regulates LDHA activity, acting as an uncompetitive inhibitor. In terms of processing, phosphorylation by ULK1 modulates the interaction with GABARAP and is required to regulate autophagy. Expressed in kidney.

The protein resides in the lysosome membrane. It is found in the cytoplasm. Its subcellular location is the cytosol. It localises to the cell projection. The protein localises to the cilium. The protein resides in the cytoskeleton. It is found in the microtubule organizing center. Its subcellular location is the centrosome. It localises to the spindle. The protein localises to the nucleus. With respect to regulation, GTPase-activating activity is inhibited in the folliculin complex (LFC), which stabilizes the GDP-bound state of RagA/RRAGA (or RagB/RRAGB), because Arg-164 is located far from the RagC/RRAGC or RagD/RRAGD nucleotide pocket. Disassembly of the LFC complex upon amino acid restimulation liberates the GTPase-activating activity. Functionally, multi-functional protein, involved in both the cellular response to amino acid availability and in the regulation of glycolysis. GTPase-activating protein that plays a key role in the cellular response to amino acid availability through regulation of the non-canonical mTORC1 signaling cascade controlling the MiT/TFE factors TFEB and TFE3. Activates mTORC1 by acting as a GTPase-activating protein: specifically stimulates GTP hydrolysis by RagC/RRAGC or RagD/RRAGD, promoting the conversion to the GDP-bound state of RagC/RRAGC or RagD/RRAGD, and thereby activating the kinase activity of mTORC1. The GTPase-activating activity is inhibited during starvation and activated in presence of nutrients. Acts as a key component for non-canonical mTORC1-dependent control of the MiT/TFE factors TFEB and TFE3, while it is not involved in mTORC1-dependent phosphorylation of canonical RPS6KB1/S6K1 and EIF4EBP1/4E-BP1. In low-amino acid conditions, the lysosomal folliculin complex (LFC) is formed on the membrane of lysosomes, which inhibits the GTPase-activating activity of FLCN, inactivates mTORC1 and maximizes nuclear translocation of TFEB and TFE3. Upon amino acid restimulation, RagA/RRAGA (or RagB/RRAGB) nucleotide exchange promotes disassembly of the LFC complex and liberates the GTPase-activating activity of FLCN, leading to activation of mTORC1 and subsequent cytoplasmic retention of TFEB and TFE3. Indirectly acts as a positive regulator of Wnt signaling by promoting mTOR-dependent cytoplasmic retention of MiT/TFE factor TFE3. Required for the exit of hematopoietic stem cell from pluripotency by promoting mTOR-dependent cytoplasmic retention of TFE3, thereby increasing Wnt signaling. Involved in the control of embryonic stem cells differentiation; together with LAMTOR1 it is necessary to recruit and activate RagC/RRAGC and RagD/RRAGD at the lysosomes, and to induce exit of embryonic stem cells from pluripotency via non-canonical, mTOR-independent TFE3 inactivation. Acts as an inhibitor of browning of adipose tissue by regulating mTOR-dependent cytoplasmic retention of TFE3. In response to flow stress, regulates STK11/LKB1 accumulation and mTORC1 activation through primary cilia: may act by recruiting STK11/LKB1 to primary cilia for activation of AMPK resided at basal bodies, causing mTORC1 down-regulation. Together with FNIP1 and/or FNIP2, regulates autophagy: following phosphorylation by ULK1, interacts with GABARAP and promotes autophagy. Required for starvation-induced perinuclear clustering of lysosomes by promoting association of RILP with its effector RAB34. Regulates glycolysis by binding to lactate dehydrogenase LDHA, acting as an uncompetitive inhibitor. This chain is Folliculin, found in Rattus norvegicus (Rat).